The chain runs to 264 residues: tRNA (guanine-N(1)-)-methyltransferase (264 aa).

Residues Gly125 and 145–150 (LGDFVL) each bind S-adenosyl-L-methionine.

This sequence belongs to the RNA methyltransferase TrmD family. As to quaternary structure, homodimer.

It is found in the cytoplasm. The catalysed reaction is guanosine(37) in tRNA + S-adenosyl-L-methionine = N(1)-methylguanosine(37) in tRNA + S-adenosyl-L-homocysteine + H(+). Its function is as follows. Specifically methylates guanosine-37 in various tRNAs. In Burkholderia mallei (strain NCTC 10247), this protein is tRNA (guanine-N(1)-)-methyltransferase.